Reading from the N-terminus, the 339-residue chain is DNA-directed RNA polymerase subunit alpha (339 aa).

The segment at Met1 to Glu233 is alpha N-terminal domain (alpha-NTD). Residues Lys267–Lys339 form an alpha C-terminal domain (alpha-CTD) region.

Belongs to the RNA polymerase alpha chain family. In plastids the minimal PEP RNA polymerase catalytic core is composed of four subunits: alpha, beta, beta', and beta''. When a (nuclear-encoded) sigma factor is associated with the core the holoenzyme is formed, which can initiate transcription.

The protein localises to the plastid. It is found in the chloroplast. It carries out the reaction RNA(n) + a ribonucleoside 5'-triphosphate = RNA(n+1) + diphosphate. Functionally, DNA-dependent RNA polymerase catalyzes the transcription of DNA into RNA using the four ribonucleoside triphosphates as substrates. The chain is DNA-directed RNA polymerase subunit alpha from Piper cenocladum (Ant piper).